A 1161-amino-acid chain; its full sequence is DNA-directed RNA polymerase subunit beta (1161 aa).

It belongs to the RNA polymerase beta chain family. As to quaternary structure, the RNAP catalytic core consists of 2 alpha, 1 beta, 1 beta' and 1 omega subunit. When a sigma factor is associated with the core the holoenzyme is formed, which can initiate transcription.

It carries out the reaction RNA(n) + a ribonucleoside 5'-triphosphate = RNA(n+1) + diphosphate. Its function is as follows. DNA-dependent RNA polymerase catalyzes the transcription of DNA into RNA using the four ribonucleoside triphosphates as substrates. This Streptomyces avermitilis (strain ATCC 31267 / DSM 46492 / JCM 5070 / NBRC 14893 / NCIMB 12804 / NRRL 8165 / MA-4680) protein is DNA-directed RNA polymerase subunit beta.